The following is a 407-amino-acid chain: Probable NADPH dehydrogenase (407 aa).

FMN-binding residues include T49 and Q124. Y206 (proton donor) is an active-site residue. 2 residues coordinate FMN: R254 and R357.

The protein belongs to the NADH:flavin oxidoreductase/NADH oxidase family. FMN is required as a cofactor.

The enzyme catalyses A + NADPH + H(+) = AH2 + NADP(+). Oxidoreductase that binds mammalian estrogens with high affinity. The protein is Probable NADPH dehydrogenase of Candida albicans (strain SC5314 / ATCC MYA-2876) (Yeast).